The chain runs to 151 residues: Small ribosomal subunit protein uS9 (151 aa).

The protein belongs to the universal ribosomal protein uS9 family.

The sequence is that of Small ribosomal subunit protein uS9 (rps9) from Aeropyrum pernix (strain ATCC 700893 / DSM 11879 / JCM 9820 / NBRC 100138 / K1).